A 376-amino-acid chain; its full sequence is Hydroxylysine kinase (376 aa).

Asp-229 (proton acceptor) is an active-site residue.

The protein belongs to the aminoglycoside phosphotransferase family.

It is found in the cytoplasm. It catalyses the reaction (5R)-5-hydroxy-L-lysine + GTP = (5R)-5-phosphooxy-L-lysine + GDP + H(+). Its function is as follows. Catalyzes the GTP-dependent phosphorylation of 5-hydroxy-L-lysine. The protein is Hydroxylysine kinase (Hykk) of Mus musculus (Mouse).